The primary structure comprises 294 residues: tRNA dimethylallyltransferase (294 aa).

Position 9 to 16 (9 to 16 (GPTASGKS)) interacts with ATP. Substrate is bound at residue 11–16 (TASGKS). The interaction with substrate tRNA stretch occupies residues 155–159 (QRVIR).

It belongs to the IPP transferase family. In terms of assembly, monomer. Mg(2+) is required as a cofactor.

It carries out the reaction adenosine(37) in tRNA + dimethylallyl diphosphate = N(6)-dimethylallyladenosine(37) in tRNA + diphosphate. In terms of biological role, catalyzes the transfer of a dimethylallyl group onto the adenine at position 37 in tRNAs that read codons beginning with uridine, leading to the formation of N6-(dimethylallyl)adenosine (i(6)A). The chain is tRNA dimethylallyltransferase from Leuconostoc citreum (strain KM20).